We begin with the raw amino-acid sequence, 475 residues long: Ribulose bisphosphate carboxylase large chain (475 aa).

Positions 1 to 2 (MS) are excised as a propeptide. Pro-3 bears the N-acetylproline mark. N6,N6,N6-trimethyllysine is present on Lys-14. Substrate-binding residues include Asn-123 and Thr-173. Lys-175 serves as the catalytic Proton acceptor. Lys-177 lines the substrate pocket. Residues Lys-201, Asp-203, and Glu-204 each coordinate Mg(2+). Lys-201 carries the N6-carboxylysine modification. Catalysis depends on His-294, which acts as the Proton acceptor. 2 residues coordinate substrate: His-327 and Ser-379.

This sequence belongs to the RuBisCO large chain family. Type I subfamily. In terms of assembly, heterohexadecamer of 8 large chains and 8 small chains; disulfide-linked. The disulfide link is formed within the large subunit homodimers. It depends on Mg(2+) as a cofactor. Post-translationally, the disulfide bond which can form in the large chain dimeric partners within the hexadecamer appears to be associated with oxidative stress and protein turnover.

It localises to the plastid. The protein localises to the chloroplast. The enzyme catalyses 2 (2R)-3-phosphoglycerate + 2 H(+) = D-ribulose 1,5-bisphosphate + CO2 + H2O. It carries out the reaction D-ribulose 1,5-bisphosphate + O2 = 2-phosphoglycolate + (2R)-3-phosphoglycerate + 2 H(+). Functionally, ruBisCO catalyzes two reactions: the carboxylation of D-ribulose 1,5-bisphosphate, the primary event in carbon dioxide fixation, as well as the oxidative fragmentation of the pentose substrate in the photorespiration process. Both reactions occur simultaneously and in competition at the same active site. This chain is Ribulose bisphosphate carboxylase large chain, found in Amaranthus hypochondriacus (Prince-of-Wales feather).